The primary structure comprises 545 residues: T-complex protein 1 subunit gamma (545 aa).

Met1 bears the N-acetylmethionine mark. The tract at residues 1–24 (MMGHRPVLVLSQNTKRESGRKVQS) is disordered. Phosphoserine is present on Ser11. Residue Lys15 forms a Glycyl lysine isopeptide (Lys-Gly) (interchain with G-Cter in SUMO2) linkage. ADP is bound at residue Gly42. Gly42 provides a ligand contact to ATP. Residue Asp93 participates in Mg(2+) binding. Residues Gly94, Thr95, Thr96, Ser97, Thr162, and Lys163 each contribute to the ADP site. 3 residues coordinate ATP: Gly94, Thr95, and Thr96. Ser170 carries the post-translational modification Phosphoserine. Lys222 carries the post-translational modification N6-acetyllysine. Residues Ser243 and Ser244 each carry the phosphoserine modification. Tyr247 carries the post-translational modification Phosphotyrosine. Glycyl lysine isopeptide (Lys-Gly) (interchain with G-Cter in SUMO2) cross-links involve residues Lys248 and Lys249. Ser252 bears the Phosphoserine mark. An intrachain disulfide couples Cys366 to Cys372. A Glycyl lysine isopeptide (Lys-Gly) (interchain with G-Cter in SUMO2) cross-link involves residue Lys381. An ADP-binding site is contributed by Gly411. Position 411 (Gly411) interacts with ATP. 2 positions are modified to phosphothreonine: Thr430 and Thr459. ADP contacts are provided by Gly482, Glu483, Glu497, and Lys502. Gly482 serves as a coordination point for ATP. Glu497 serves as a coordination point for ATP. Residues 526–545 (HKKKGDDQNRQTGAPDAGQE) are disordered.

This sequence belongs to the TCP-1 chaperonin family. As to quaternary structure, component of the chaperonin-containing T-complex (TRiC), a hexadecamer composed of two identical back-to-back stacked rings enclosing a protein folding chamber. Each ring is made up of eight different subunits: TCP1/CCT1, CCT2, CCT3, CCT4, CCT5, CCT6A/CCT6, CCT7, CCT8. Interacts with PACRG. Interacts with DNAAF4. Interacts with DLEC1. The N-terminus is blocked.

The protein localises to the cytoplasm. The catalysed reaction is ATP + H2O = ADP + phosphate + H(+). Its function is as follows. Component of the chaperonin-containing T-complex (TRiC), a molecular chaperone complex that assists the folding of actin, tubulin and other proteins upon ATP hydrolysis. The TRiC complex mediates the folding of WRAP53/TCAB1, thereby regulating telomere maintenance. As part of the TRiC complex may play a role in the assembly of BBSome, a complex involved in ciliogenesis regulating transports vesicles to the cilia. This Mus musculus (Mouse) protein is T-complex protein 1 subunit gamma (Cct3).